The primary structure comprises 200 residues: Chromophore lyase CpcS/CpeS (200 aa).

It belongs to the CpcS/CpeS biliprotein lyase family.

Covalently attaches a chromophore to Cys residue(s) of phycobiliproteins. In Synechococcus sp. (strain WH8020), this protein is Chromophore lyase CpcS/CpeS.